The chain runs to 205 residues: Large ribosomal subunit protein bL21 (205 aa).

Positions 107–137 (APAKKAAAKKEEAPKADTAPKAAAAPTEEAA) are disordered. A compositionally biased stretch (low complexity) spans 122–137 (ADTAPKAAAAPTEEAA).

Belongs to the bacterial ribosomal protein bL21 family. In terms of assembly, part of the 50S ribosomal subunit. Contacts protein L20.

Its function is as follows. This protein binds to 23S rRNA in the presence of protein L20. This is Large ribosomal subunit protein bL21 from Hyphomonas neptunium (strain ATCC 15444).